We begin with the raw amino-acid sequence, 501 residues long: MNALHTLTTLQEAVDWLRQRVTGTLQTDSRLIQPGDGFIAWPGAATDGRAHVGDAVARGAAACLVECEGVEPFALAGDHIAALRGLKAATGMIASEWFGHPTQRLQVLAVTGTNGKTSTAWWLADALNQLSKEELPALAGCALVGTLGMGVPPALQTTGMTTPDPVRLQRAFAQFAEAGHRACAIEASSIGLAEHRLDGTRIHVALFTNFTQDHLDYHPGMAAYWQAKRALFDWPGLRAAVVNVDDPQGAALHAELQGSDLDLWSISLQGPARLQAKHIVHTGAGLALTVAEGAHTEVLQTQVIGLYNVSNLLGVIAGMRALGVPLAQALQACARLRPVPGRMEQLAAAGQPLVAVDYAHTPDALHQALAALKPVAAQRGGRLWCVFGCGGNRDAGKRPLMGAVAQREADEVIVTSDNPRGEEPQSIIHQILLGTIAGTSVRAEVDRAAAIAQALAEAGANDVVLIAGKGHEDYQEAAGQRVPFSDMAHARAALARRGGVA.

Residue S29 coordinates UDP-N-acetyl-alpha-D-muramoyl-L-alanyl-D-glutamate. 112 to 118 (GTNGKTS) contributes to the ATP binding site. UDP-N-acetyl-alpha-D-muramoyl-L-alanyl-D-glutamate contacts are provided by residues 161–162 (TT), S188, and R196. K228 is modified (N6-carboxylysine). Meso-2,6-diaminopimelate contacts are provided by residues R393, 417–420 (DNPR), G468, and E472. The short motif at 417–420 (DNPR) is the Meso-diaminopimelate recognition motif element.

This sequence belongs to the MurCDEF family. MurE subfamily. The cofactor is Mg(2+). In terms of processing, carboxylation is probably crucial for Mg(2+) binding and, consequently, for the gamma-phosphate positioning of ATP.

It is found in the cytoplasm. The catalysed reaction is UDP-N-acetyl-alpha-D-muramoyl-L-alanyl-D-glutamate + meso-2,6-diaminopimelate + ATP = UDP-N-acetyl-alpha-D-muramoyl-L-alanyl-gamma-D-glutamyl-meso-2,6-diaminopimelate + ADP + phosphate + H(+). It participates in cell wall biogenesis; peptidoglycan biosynthesis. Its function is as follows. Catalyzes the addition of meso-diaminopimelic acid to the nucleotide precursor UDP-N-acetylmuramoyl-L-alanyl-D-glutamate (UMAG) in the biosynthesis of bacterial cell-wall peptidoglycan. The sequence is that of UDP-N-acetylmuramoyl-L-alanyl-D-glutamate--2,6-diaminopimelate ligase from Acidovorax sp. (strain JS42).